The sequence spans 172 residues: uncharacterized protein (172 aa).

Residues 3 to 171 (KKVAIILSNE…FNREIVKQLQ (169 aa)) enclose the PfpI endopeptidase domain.

This sequence belongs to the peptidase C56 family.

This is an uncharacterized protein from Staphylococcus haemolyticus (strain JCSC1435).